A 379-amino-acid chain; its full sequence is Protein COS4 (379 aa).

4 helical membrane-spanning segments follow: residues 43 to 63 (IYKS…SVWW), 70 to 90 (IYPL…VLVI), 233 to 253 (ISNI…YVSR), and 255 to 275 (MCLL…VQGF).

Belongs to the DUP/COS family.

The protein localises to the membrane. In Saccharomyces cerevisiae (strain ATCC 204508 / S288c) (Baker's yeast), this protein is Protein COS4 (COS4).